A 105-amino-acid chain; its full sequence is Pyrimidine/purine nucleoside phosphorylase (105 aa).

The protein belongs to the nucleoside phosphorylase PpnP family.

It catalyses the reaction a purine D-ribonucleoside + phosphate = a purine nucleobase + alpha-D-ribose 1-phosphate. The enzyme catalyses adenosine + phosphate = alpha-D-ribose 1-phosphate + adenine. The catalysed reaction is cytidine + phosphate = cytosine + alpha-D-ribose 1-phosphate. It carries out the reaction guanosine + phosphate = alpha-D-ribose 1-phosphate + guanine. It catalyses the reaction inosine + phosphate = alpha-D-ribose 1-phosphate + hypoxanthine. The enzyme catalyses thymidine + phosphate = 2-deoxy-alpha-D-ribose 1-phosphate + thymine. The catalysed reaction is uridine + phosphate = alpha-D-ribose 1-phosphate + uracil. It carries out the reaction xanthosine + phosphate = alpha-D-ribose 1-phosphate + xanthine. Its function is as follows. Catalyzes the phosphorolysis of diverse nucleosides, yielding D-ribose 1-phosphate and the respective free bases. Can use uridine, adenosine, guanosine, cytidine, thymidine, inosine and xanthosine as substrates. Also catalyzes the reverse reactions. The protein is Pyrimidine/purine nucleoside phosphorylase of Cupriavidus necator (strain ATCC 17699 / DSM 428 / KCTC 22496 / NCIMB 10442 / H16 / Stanier 337) (Ralstonia eutropha).